The sequence spans 130 residues: Transcription antitermination protein NusB (130 aa).

The protein belongs to the NusB family.

In terms of biological role, involved in transcription antitermination. Required for transcription of ribosomal RNA (rRNA) genes. Binds specifically to the boxA antiterminator sequence of the ribosomal RNA (rrn) operons. The sequence is that of Transcription antitermination protein NusB from Bacillus cereus (strain B4264).